Reading from the N-terminus, the 263-residue chain is Undecaprenyl-diphosphatase (263 aa).

Helical transmembrane passes span 1 to 21, 41 to 61, 69 to 89, 96 to 116, 147 to 167, 177 to 197, 208 to 228, and 238 to 258; these read MSYL…FLPI, FTKA…LVLY, WGFY…GFVV, LMGS…ILIW, AIAM…GLTL, FSFF…LLKI, LLLV…KFFI, and GFGY…YTGH.

It belongs to the UppP family.

It localises to the cell inner membrane. The catalysed reaction is di-trans,octa-cis-undecaprenyl diphosphate + H2O = di-trans,octa-cis-undecaprenyl phosphate + phosphate + H(+). Functionally, catalyzes the dephosphorylation of undecaprenyl diphosphate (UPP). Confers resistance to bacitracin. The polypeptide is Undecaprenyl-diphosphatase (Bdellovibrio bacteriovorus (strain ATCC 15356 / DSM 50701 / NCIMB 9529 / HD100)).